The sequence spans 443 residues: EGF-containing fibulin-like extracellular matrix protein 2 (443 aa).

A signal peptide spans 1 to 25 (MLPFASCLPGSLLLWALLLLLLGAA). Residues 36–81 (YTECTDGYEWDADSQHCRDVNECLTIPEACKGEMKCINHYGGYLCL) form the EGF-like 1; atypical domain. 18 cysteine pairs are disulfide-bonded: cysteine 58-cysteine 121, cysteine 65-cysteine 80, cysteine 71-cysteine 109, cysteine 127-cysteine 140, cysteine 134-cysteine 149, cysteine 151-cysteine 162, cysteine 168-cysteine 177, cysteine 173-cysteine 186, cysteine 188-cysteine 201, cysteine 207-cysteine 217, cysteine 213-cysteine 226, cysteine 228-cysteine 241, cysteine 247-cysteine 258, cysteine 254-cysteine 267, cysteine 269-cysteine 281, cysteine 287-cysteine 300, cysteine 294-cysteine 309, and cysteine 315-cysteine 327. The EGF-like 2; calcium-binding domain occupies 123-163 (DVDECAQALHDCRPSQDCHNLPGSYQCTCPDGYRKVGPECV). Residues 164–202 (DIDECRYRYCQHRCVNLPGSFRCQCEPGFQLGPNNRSCV) form the EGF-like 3; calcium-binding domain. Asparagine 198 carries N-linked (GlcNAc...) asparagine glycosylation. The region spanning 203 to 242 (DVNECDMGAPCEQRCFNSYGTFLCRCNQGYELHRDGFSCS) is the EGF-like 4; calcium-binding domain. Positions 243 to 282 (DIDECSYSSYLCQYRCVNEPGRFSCHCPQGYQLLATRLCQ) constitute an EGF-like 5; calcium-binding domain. Residues 283–328 (DIDECETGAHQCSEAQTCVNFHGGYRCVDTNRCVEPYVQVSDNRCF) form the EGF-like 6; calcium-binding domain. The N-linked (GlcNAc...) asparagine glycan is linked to asparagine 394.

It belongs to the fibulin family. As to quaternary structure, homodimer; disulfide-linked. Multimer; allows heparin binding. Monomer. Interacts with FBN1 (via N-terminal domain); this interaction inhibits EFEMP2 binding to LOX and ELN. Interacts with LOX (via propeptide); this interaction is strong and facilitates formation of ternary complexes with ELN during elastic fiber assembly; this interaction limits interaction of EFEMP2 with FBLN5. Interacts with PITX2. Interacts with ELN with moderate affinity; this interaction regulates ELN self-assembly maturation stage. Interacts with FBLN5 with moderate affinity. Interacts with LOXL1 (via propeptide), LTBP1 and TGFB1 stronger than with LOXL2 and LTBP3. Interacts with PCOLCE. Interacts with collagen type IV trimer (COL4A1-COL4A1-COL4A2), NID2 and moderately with COL15A1-derived endostatin. Interacts with EMILIN1; this interaction promotes the incorporation of EFEMP2 into the extracellular matrix. Interacts with LTBP4; the LTBP4 long form (LTBP4L) has a stronger binding affinity than the LTBP4 short form and the LTBP4 long form promotes fibrillar deposition of EFEMP2. Post-translationally, N-glycosylated; contains mostly complex-type glycans. Not O-glycosylated. In terms of processing, cleaved by ELANE; produces a 50-55 kDa fragment. Cleaved by MMP2 and MMP9; produces several fragments.

It is found in the secreted. Its subcellular location is the extracellular space. It localises to the extracellular matrix. The protein localises to the basement membrane. In terms of biological role, plays a crucial role in elastic fiber formation in tissue, and in the formation of ultrastructural connections between elastic laminae and smooth muscle cells in the aorta, therefore participates in terminal differentiation and maturation of smooth muscle cell (SMC) and in the mechanical properties and wall integrity maintenance of the aorta. In addition, is involved in the control of collagen fibril assembly in tissue throught proteolytic activation of LOX leading to cross- linking of collagen and elastin. Also promotes ELN coacervation and participates in the deposition of ELN coacervates on to microfibrils but also regulates ELN cross- linking through LOX interaction. Moreover adheres to the cells through heparin binding in a calcium-dependent manner and regulates vascularlar smooth muscle cells proliferation through angiotensin signaling. This Cricetulus griseus (Chinese hamster) protein is EGF-containing fibulin-like extracellular matrix protein 2.